An 858-amino-acid chain; its full sequence is Neural cell adhesion molecule 1 (858 aa).

The N-terminal stretch at 1-19 (MLQTKDLIWTLFFLGTAVS) is a signal peptide. Ig-like C2-type domains are found at residues 20-111 (LQVD…ATVN), 116-205 (QKLM…KDIQ), 212-301 (PTIQ…ATIH), 308-413 (PKIT…LEVQ), and 416-501 (PKLQ…ESLE). Residues 20-718 (LQVDIVPSQG…IPANGSPTSG (699 aa)) lie on the Extracellular side of the membrane. Disulfide bonds link Cys-41/Cys-96 and Cys-139/Cys-189. The N-linked (GlcNAc...) asparagine glycan is linked to Asn-222. Cys-235 and Cys-287 form a disulfide bridge. N-linked (GlcNAc...) asparagine glycosylation is found at Asn-315, Asn-347, Asn-433, Asn-459, and Asn-488. A disulfide bridge connects residues Cys-329 and Cys-395. Cys-436 and Cys-489 are disulfide-bonded. Fibronectin type-III domains follow at residues 509–608 (TPSS…TQPV) and 611–706 (EPSA…SAQP). Pro-706 is lipidated: GPI-anchor amidated asparagine. Residues 719–739 (LSTGAIVGILIVIFVLLLVVV) traverse the membrane as a helical segment. Over 740-858 (DITCYFLNKC…TQTKENESKA (119 aa)) the chain is Cytoplasmic. Ile-741 is lipidated: GPI-anchor amidated asparagine. Residues 766–858 (GAKGKDMEEG…TQTKENESKA (93 aa)) are disordered. Composition is skewed to basic and acidic residues over residues 768 to 809 (KGKD…HTEP) and 817 to 834 (EPEKGPVEAKPECQETET). Residues Ser-780 and Ser-784 each carry the phosphoserine modification.

In terms of assembly, (Microbial infection) Interacts with rabies virus glycoprotein. As to quaternary structure, (Microbial infection) Interacts with Zika virus envelope protein E. Interacts with MDK. Found in a complex with SLC39A6, SLC39A10 and with NCAM1; this complex controls NCAM1 phosphorylation and integration into focal adhesion complexes during epithelial-tomesenchymal transition. Interacts with synaptic plasticity regulator PANTS. In terms of processing, polysialylated at Asn-459 and Asn-488 by ST8SIA2 and ST8SIA4. Polysialylation modulates cell interactions by confering both attractive and repulsive properties that are highly regulated by ST8SIA2 and ST8SIA4. Polysialylation is formed on a-2,3-linked sialic acid of core glycans.

The protein resides in the cell membrane. The protein localises to the secreted. In terms of biological role, this protein is a cell adhesion molecule involved in neuron-neuron adhesion, neurite fasciculation, outgrowth of neurites, etc. Its function is as follows. (Microbial infection) Acts as a receptor for rabies virus. (Microbial infection) Acts as a receptor for Zika virus. The protein is Neural cell adhesion molecule 1 of Homo sapiens (Human).